The chain runs to 541 residues: MKIRFCNGFTKPGFLLVHFEPPSFFAVRSRSLSDSTYGNLCNHKKRPGTGIGLTVQCAIANRRFSSRSLDSPRRERSSRSSSSSGRDRDRDKDKGRDSKSLYSRPSLLDMNKEKAANRAKVYEFLRGIGIVPDELDGLELPVTADVMKERVEFLHKLGLTIEDINNYPLVLGCSVKKNMVPVLDYLGKLGVRKSTFTEFLRRYPQVLHSSVVIDLAPVVKYLQGLDIKPSDVPRVLERYPEVLGFKLEGTMSTSVAYLVGIGVARREIGGILTRYPEILGMRVARIIKPLVEYLEVLGIPRLAAARLIEKRPHILGFELDDTVKPNVQILQDFNVRETSLPSIIAQYPEIIGIDLKPKLDTQRKLLCSAIHLNPEDLGSLIERMPQFVSLSESPMLKHIDFLTKCGFSIDQTREMVIGCPQVLALNLGIMKLSFEYFQKEMKRPLQDLVDFPAFFTYGLESTVKPRHKKIIKKGIKCSLAWMLNCSDEKFEQRMSYDTIDIEEVETDPSSFDMNTLMQPEREEESDSEYEEEEDDDDEEFA.

The N-terminal 45 residues, 1–45 (MKIRFCNGFTKPGFLLVHFEPPSFFAVRSRSLSDSTYGNLCNHKK), are a transit peptide targeting the chloroplast. Disordered regions lie at residues 66 to 103 (SRSL…SLYS) and 503 to 541 (EVET…EEFA). Residues 85–99 (GRDRDRDKDKGRDSK) are compositionally biased toward basic and acidic residues. Residues 507–517 (DPSSFDMNTLM) show a composition bias toward polar residues. The span at 521-541 (REEESDSEYEEEEDDDDEEFA) shows a compositional bias: acidic residues.

This sequence belongs to the mTERF family.

The protein resides in the plastid. Its subcellular location is the chloroplast. The protein localises to the mitochondrion. In terms of biological role, transcription termination factor required for processing and steady-state levels of plastid transcripts. Required for splicing of the chloroplastic Clp protease (ClpP) group IIa intron. Required for maturation of 16S rRNA and 23S rRNA in the chloroplast. Essential for embryogenesis. Required for the maintenance of the correct levels of transcripts in the mitochondria and chloroplasts. In Arabidopsis thaliana (Mouse-ear cress), this protein is Transcription termination factor MTERF4, chloroplastic.